The following is a 421-amino-acid chain: UDP-N-acetylglucosamine 1-carboxyvinyltransferase 1 (421 aa).

A phosphoenolpyruvate-binding site is contributed by 22–23; that stretch reads KN. Arginine 95 contacts UDP-N-acetyl-alpha-D-glucosamine. Cysteine 119 (proton donor) is an active-site residue. Position 119 is a 2-(S-cysteinyl)pyruvic acid O-phosphothioketal (cysteine 119). UDP-N-acetyl-alpha-D-glucosamine is bound by residues 124 to 128, aspartate 308, and valine 330; that span reads RPIEQ.

It belongs to the EPSP synthase family. MurA subfamily.

It is found in the cytoplasm. It catalyses the reaction phosphoenolpyruvate + UDP-N-acetyl-alpha-D-glucosamine = UDP-N-acetyl-3-O-(1-carboxyvinyl)-alpha-D-glucosamine + phosphate. The protein operates within cell wall biogenesis; peptidoglycan biosynthesis. Cell wall formation. Adds enolpyruvyl to UDP-N-acetylglucosamine. The protein is UDP-N-acetylglucosamine 1-carboxyvinyltransferase 1 of Staphylococcus epidermidis (strain ATCC 35984 / DSM 28319 / BCRC 17069 / CCUG 31568 / BM 3577 / RP62A).